Here is a 61-residue protein sequence, read N- to C-terminus: Copper metallothionein 1-1 (61 aa).

Residues 1–8 (MFSELINF) constitute a propeptide that is removed on maturation. Cu cation is bound by residues C15, C17, C19, C22, and C28. A Glycyl lysine isopeptide (Lys-Gly) (interchain with G-Cter in ubiquitin) cross-link involves residue K30. 5 residues coordinate Cu cation: C32, C34, C38, C44, and C46. The tract at residues 37 to 61 (GCNSDDKCPCGNKSEETKKSCCSGK) is disordered. A compositionally biased stretch (basic and acidic residues) spans 40-55 (SDDKCPCGNKSEETKK).

The protein belongs to the metallothionein superfamily. Type 12 family.

Its function is as follows. Protects the cell against copper toxicity by tightly chelating copper ions. May also act as a depository for copper designated for the effective transfer into the apo forms of copper proteins. This is Copper metallothionein 1-1 (CUP1-1) from Saccharomyces cerevisiae (strain ATCC 204508 / S288c) (Baker's yeast).